A 466-amino-acid polypeptide reads, in one-letter code: Chromosomal replication initiator protein DnaA (466 aa).

The tract at residues 1–86 (MSLSLWQQCL…EVGTKPVTQT (86 aa)) is domain I, interacts with DnaA modulators. Positions 86–129 (TLKTPVHNVVAPTQTTTAQPQRVAPAARSGWDNVPAPAEPTYRS) are domain II. Residues 130–346 (NVNVKHTFDN…GALNRVIANA (217 aa)) are domain III, AAA+ region. Gly-174, Gly-176, Lys-177, and Thr-178 together coordinate ATP. The tract at residues 347 to 466 (NFTGRAITID…FSNLIRTLSS (120 aa)) is domain IV, binds dsDNA.

Belongs to the DnaA family. As to quaternary structure, oligomerizes as a right-handed, spiral filament on DNA at oriC.

Its subcellular location is the cytoplasm. Its function is as follows. Plays an essential role in the initiation and regulation of chromosomal replication. ATP-DnaA binds to the origin of replication (oriC) to initiate formation of the DNA replication initiation complex once per cell cycle. Binds the DnaA box (a 9 base pair repeat at the origin) and separates the double-stranded (ds)DNA. Forms a right-handed helical filament on oriC DNA; dsDNA binds to the exterior of the filament while single-stranded (ss)DNA is stabiized in the filament's interior. The ATP-DnaA-oriC complex binds and stabilizes one strand of the AT-rich DNA unwinding element (DUE), permitting loading of DNA polymerase. After initiation quickly degrades to an ADP-DnaA complex that is not apt for DNA replication. Binds acidic phospholipids. The chain is Chromosomal replication initiator protein DnaA from Salmonella choleraesuis (strain SC-B67).